Reading from the N-terminus, the 357-residue chain is MADSLVLLTGATGFIGFRILIELLRQGYSVRAVIRSAGKGQWLESRLTAVMKGSDYKDRFETTTVADFVTDGAFDQAAENTSYIIHVASPIVSSDNPDDWEHDFKRVAVKGSIGVLEAAKRSGTVRRVVITSSMVGLFSPKALFAEPSEVPLNAESRIPEMEPPYAHKMLAYQAGKIASINSAEAWIKNEKPAFDLVHMHPSFVTGRDDLATTREDLRKFSSNWHSMQIVLGHKNPIGKPILTCHNDDVARCHVLALDPKVTGNQSFLISCSPEDGSEWDDVKKFVQREFPEAVAQGVLPNDGHMPTVNKGVRFDVRKTEETFGFKHIPYEAQVLDVVKQYLELPEKDEGVEISTTA.

Residue Tyr172 coordinates NADP(+).

It belongs to the NAD(P)-dependent epimerase/dehydratase family. Dihydroflavonol-4-reductase subfamily.

It participates in mycotoxin biosynthesis. In terms of biological role, ketoreductase; part of the gene cluster that mediates the biosynthesis of cercosporin, a light-activated, non-host-selective toxin. The perylenequinone chromophore of cercosporin absorbs light energy to attain an electronically-activated triplet state and produces active oxygen species such as the hydroxyl radical, superoxide, hydrogen peroxide or singlet oxygen upon reaction with oxygen molecules. These reactive oxygen species cause damage to various cellular components including lipids, proteins and nucleic acids. The first step of cercosporin biosynthesis is performed by the polyketide synthase CTB1 which catalyzes the formation of nor-toralactone. The starter unit acyltransferase (SAT) domain of CTB1 initiates polyketide extension by the selective utilization of acetyl-CoA, which is elongated to the heptaketide in the beta-ketoacyl synthase (KS) domain by successive condensations with six malonyl units introduced by the malonyl acyltransferase (MAT) domain. The product template (PT) domain catalyzes C4-C9 and C2-C11 aldol cyclizations and dehydrations to a trihydroxynaphthalene, which is thought to be delivered to the thioesterase (TE) domain for product release. The bifunctional enzyme CTB3 then methylates nor-toralactone to toralactone before conducting an unusual oxidative aromatic ring opening. The O-methyltransferase CTB2 further methylates the nascent OH-6 of the CBT3 product, blocking further oxidation at this site before the reductase CTB6 reduces the 2-oxopropyl ketone at position C7, giving naphthalene. The FAD-dependent monooxygenase CTB5 in concert with the multicopper oxidase CTB12 are responsible for homodimerization of naphthalene with CTB7 installing the dioxepine moiety, finally producing cercosporin. The fasciclin domain-containing protein CTB11 might act with CTB5 and CTB12 whereas the roles of CTB9 and CTB10 have still to be elucidated. The polypeptide is Ketoreductase CTB6 (Cercospora beticola (Sugarbeet leaf spot fungus)).